We begin with the raw amino-acid sequence, 185 residues long: Uroplakin-2 (185 aa).

The first 26 residues, 1 to 26, serve as a signal peptide directing secretion; sequence MASPWPVWTLSWILILLAVLVPGAAA. A propeptide spanning residues 27–85 is cleaved from the precursor; the sequence is DFNISSLSGLLSPVMTESLLVALPPCHLTGGNATLTVRRANDSKVVRSSFVVPPCRGRR. 3 N-linked (GlcNAc...) asparagine glycosylation sites follow: asparagine 29, asparagine 58, and asparagine 67. Topologically, residues 86-156 are lumenal; the sequence is ELVSVVDSGS…IGLAMARTGG (71 aa). Residues 157–177 form a helical membrane-spanning segment; sequence MVVITVLLSVAMFLLVLGLII. Residues 178 to 185 are Cytoplasmic-facing; it reads ALALGARK.

The protein belongs to the uroplakin-2 family. Interacts with uroplakin-1a (UPK1A). Bladder epithelium.

The protein localises to the cell membrane. Component of the asymmetric unit membrane (AUM); a highly specialized biomembrane elaborated by terminally differentiated urothelial cells. May play an important role in regulating the assembly of the AUM. The chain is Uroplakin-2 (UPK2) from Bos taurus (Bovine).